The following is a 222-amino-acid chain: Ribosomal RNA small subunit methyltransferase G (222 aa).

S-adenosyl-L-methionine is bound by residues glycine 80, leucine 85, 131 to 132, and arginine 148; that span reads VE.

It belongs to the methyltransferase superfamily. RNA methyltransferase RsmG family.

The protein localises to the cytoplasm. It catalyses the reaction guanosine(527) in 16S rRNA + S-adenosyl-L-methionine = N(7)-methylguanosine(527) in 16S rRNA + S-adenosyl-L-homocysteine. Its function is as follows. Specifically methylates the N7 position of guanine in position 527 of 16S rRNA. This is Ribosomal RNA small subunit methyltransferase G from Polynucleobacter asymbioticus (strain DSM 18221 / CIP 109841 / QLW-P1DMWA-1) (Polynucleobacter necessarius subsp. asymbioticus).